Here is an 82-residue protein sequence, read N- to C-terminus: Delta-actitoxin-Aeq2b 3 (82 aa).

The N-terminal stretch at 1-19 (MNRLMILVFAAVILALASA) is a signal peptide. Residues 20-26 (DEDVDIT) constitute a propeptide that is removed on maturation. Cystine bridges form between Cys-32-Cys-79, Cys-34-Cys-69, and Cys-62-Cys-80.

The protein belongs to the sea anemone sodium channel inhibitory toxin family. Type I subfamily.

The protein localises to the secreted. It localises to the nematocyst. In terms of biological role, binds specifically to voltage-gated sodium channels (Nav), thereby delaying their inactivation during signal transduction. Causes death to crabs. This chain is Delta-actitoxin-Aeq2b 3, found in Actinia equina (Beadlet anemone).